A 120-amino-acid chain; its full sequence is MALKIRLTRGGAKKRPYYRIVVADARAPRDGRFIDKVGAYDPMKAKDDPARIVLDNEKIQSWLAKGAQPTDRVLRFLDQAGLAKRPARNNPQKAEPGEKAKERAAKRAEKAAAPAEDAAA.

The segment at 81 to 120 (GLAKRPARNNPQKAEPGEKAKERAAKRAEKAAAPAEDAAA) is disordered. Over residues 95 to 110 (EPGEKAKERAAKRAEK) the composition is skewed to basic and acidic residues. A compositionally biased stretch (low complexity) spans 111 to 120 (AAAPAEDAAA).

Belongs to the bacterial ribosomal protein bS16 family.

The polypeptide is Small ribosomal subunit protein bS16 (Methylobacterium radiotolerans (strain ATCC 27329 / DSM 1819 / JCM 2831 / NBRC 15690 / NCIMB 10815 / 0-1)).